The primary structure comprises 308 residues: Ribosomal RNA large subunit methyltransferase F (308 aa).

This sequence belongs to the methyltransferase superfamily. METTL16/RlmF family.

Its subcellular location is the cytoplasm. The enzyme catalyses adenosine(1618) in 23S rRNA + S-adenosyl-L-methionine = N(6)-methyladenosine(1618) in 23S rRNA + S-adenosyl-L-homocysteine + H(+). Specifically methylates the adenine in position 1618 of 23S rRNA. The protein is Ribosomal RNA large subunit methyltransferase F of Escherichia coli O157:H7.